Reading from the N-terminus, the 237-residue chain is Pyridoxine 5'-phosphate synthase (237 aa).

N7 and R18 together coordinate 3-amino-2-oxopropyl phosphate. H43 functions as the Proton acceptor in the catalytic mechanism. Residues R45 and H50 each contribute to the 1-deoxy-D-xylulose 5-phosphate site. The Proton acceptor role is filled by E70. T100 contacts 1-deoxy-D-xylulose 5-phosphate. Catalysis depends on H190, which acts as the Proton donor. 3-amino-2-oxopropyl phosphate-binding positions include D191 and 213–214 (GH).

Belongs to the PNP synthase family. As to quaternary structure, homooctamer; tetramer of dimers.

It is found in the cytoplasm. The catalysed reaction is 3-amino-2-oxopropyl phosphate + 1-deoxy-D-xylulose 5-phosphate = pyridoxine 5'-phosphate + phosphate + 2 H2O + H(+). It participates in cofactor biosynthesis; pyridoxine 5'-phosphate biosynthesis; pyridoxine 5'-phosphate from D-erythrose 4-phosphate: step 5/5. Its function is as follows. Catalyzes the complicated ring closure reaction between the two acyclic compounds 1-deoxy-D-xylulose-5-phosphate (DXP) and 3-amino-2-oxopropyl phosphate (1-amino-acetone-3-phosphate or AAP) to form pyridoxine 5'-phosphate (PNP) and inorganic phosphate. This is Pyridoxine 5'-phosphate synthase from Bacteroides thetaiotaomicron (strain ATCC 29148 / DSM 2079 / JCM 5827 / CCUG 10774 / NCTC 10582 / VPI-5482 / E50).